The sequence spans 362 residues: METTTRKQKKALETKKPSIYSLQLHEMQEWLKEQGEPKFRAGQIFDWLYKKRVKNYEDMTNLSKGLREKLSNSFDITTLNTLVKQTSSDGTIKFLFQLYDGYSIETVLMRHEYGNSICVTTQVGCRIGCTFCASTLGGLKRNLEAGEIVAQVVEVQRALDETNERVSSLVVMGIGEPFDNYDHLMSFLRIVNHEKGINIGARHMTVSTSGIIPKIYKFAEEDLQINFAISLHAPNTELRSKLMPINRAYKLPDLMEAIKYYINRTGRRVTFEYGLFGGENDQVEHAEELAQLLKGVKCHVNLIPVNYVPERDYVRTPREQIFLFEKTLKNRGVNVTIRREQGHDIDAACGQLRAKERKEETR.

The active-site Proton acceptor is the Glu105. Positions 111–344 (HEYGNSICVT…VTIRREQGHD (234 aa)) constitute a Radical SAM core domain. An intrachain disulfide couples Cys118 to Cys349. 3 residues coordinate [4Fe-4S] cluster: Cys125, Cys129, and Cys132. S-adenosyl-L-methionine contacts are provided by residues 175–176 (GE), Ser207, 230–232 (SLH), and Asn306. Cys349 (S-methylcysteine intermediate) is an active-site residue.

This sequence belongs to the radical SAM superfamily. RlmN family. It depends on [4Fe-4S] cluster as a cofactor.

The protein resides in the cytoplasm. The catalysed reaction is adenosine(2503) in 23S rRNA + 2 reduced [2Fe-2S]-[ferredoxin] + 2 S-adenosyl-L-methionine = 2-methyladenosine(2503) in 23S rRNA + 5'-deoxyadenosine + L-methionine + 2 oxidized [2Fe-2S]-[ferredoxin] + S-adenosyl-L-homocysteine. It catalyses the reaction adenosine(37) in tRNA + 2 reduced [2Fe-2S]-[ferredoxin] + 2 S-adenosyl-L-methionine = 2-methyladenosine(37) in tRNA + 5'-deoxyadenosine + L-methionine + 2 oxidized [2Fe-2S]-[ferredoxin] + S-adenosyl-L-homocysteine. In terms of biological role, specifically methylates position 2 of adenine 2503 in 23S rRNA and position 2 of adenine 37 in tRNAs. The protein is Probable dual-specificity RNA methyltransferase RlmN of Bacillus cytotoxicus (strain DSM 22905 / CIP 110041 / 391-98 / NVH 391-98).